The chain runs to 843 residues: Translation initiation factor IF-2 (843 aa).

The tract at residues 94-259 (QRSPEEIEAE…AHGFQSPTGP (166 aa)) is disordered. The segment covering 96–135 (SPEEIEAERKREMDERRAVENAARQKAEEEAKRRAEEDAR) has biased composition (basic and acidic residues). Residues 136–177 (NQPAAGQPASAPAQPVAAAEPVREAPAPAAAAPAPASAAPSA) are compositionally biased toward low complexity. Composition is skewed to basic and acidic residues over residues 178-219 (DARK…EKAP) and 227-236 (TTDEESDSFR). The segment covering 237-250 (RGGRGKSRLKKRNA) has biased composition (basic residues). A tr-type G domain is found at 343–512 (SRAPVVTVMG…LLQAEVLELK (170 aa)). A G1 region spans residues 352–359 (GHVDHGKT). 352 to 359 (GHVDHGKT) is a binding site for GTP. Residues 377 to 381 (GITQH) form a G2 region. The interval 398-401 (DTPG) is G3. Residues 398–402 (DTPGH) and 452–455 (NKID) each bind GTP. Positions 452–455 (NKID) are G4. Residues 488-490 (SAK) form a G5 region.

Belongs to the TRAFAC class translation factor GTPase superfamily. Classic translation factor GTPase family. IF-2 subfamily.

The protein localises to the cytoplasm. Functionally, one of the essential components for the initiation of protein synthesis. Protects formylmethionyl-tRNA from spontaneous hydrolysis and promotes its binding to the 30S ribosomal subunits. Also involved in the hydrolysis of GTP during the formation of the 70S ribosomal complex. The sequence is that of Translation initiation factor IF-2 from Pseudomonas savastanoi pv. phaseolicola (strain 1448A / Race 6) (Pseudomonas syringae pv. phaseolicola (strain 1448A / Race 6)).